Here is a 278-residue protein sequence, read N- to C-terminus: Hydroxyethylthiazole kinase (278 aa).

Residue Met-49 coordinates substrate. Positions 125 and 171 each coordinate ATP. Residue Gly-198 participates in substrate binding.

Belongs to the Thz kinase family. It depends on Mg(2+) as a cofactor.

It catalyses the reaction 5-(2-hydroxyethyl)-4-methylthiazole + ATP = 4-methyl-5-(2-phosphooxyethyl)-thiazole + ADP + H(+). It participates in cofactor biosynthesis; thiamine diphosphate biosynthesis; 4-methyl-5-(2-phosphoethyl)-thiazole from 5-(2-hydroxyethyl)-4-methylthiazole: step 1/1. Catalyzes the phosphorylation of the hydroxyl group of 4-methyl-5-beta-hydroxyethylthiazole (THZ). The chain is Hydroxyethylthiazole kinase from Natronomonas pharaonis (strain ATCC 35678 / DSM 2160 / CIP 103997 / JCM 8858 / NBRC 14720 / NCIMB 2260 / Gabara) (Halobacterium pharaonis).